Consider the following 136-residue polypeptide: Putative zinc finger protein 818 (136 aa).

The C2H2-type 1; degenerate zinc-finger motif lies at 64 to 83 (NVCGKVLSQNSHLVNHQRIH). Residues 89–111 (YRCHECGKAFTQGSRFINHQIVH) form a C2H2-type 2 zinc finger.

The protein belongs to the krueppel C2H2-type zinc-finger protein family.

Its subcellular location is the nucleus. Its function is as follows. May be involved in transcriptional regulation. The polypeptide is Putative zinc finger protein 818 (ZNF818P) (Homo sapiens (Human)).